Here is a 365-residue protein sequence, read N- to C-terminus: DNA replication and repair protein RecF (365 aa).

ATP is bound at residue 30–37 (GLNAQGKT).

Belongs to the RecF family.

It localises to the cytoplasm. In terms of biological role, the RecF protein is involved in DNA metabolism; it is required for DNA replication and normal SOS inducibility. RecF binds preferentially to single-stranded, linear DNA. It also seems to bind ATP. The chain is DNA replication and repair protein RecF from Chlamydia trachomatis serovar L2b (strain UCH-1/proctitis).